The primary structure comprises 943 residues: UvrABC system protein A (943 aa).

31–38 (GLSGSGKS) serves as a coordination point for ATP. The C4-type zinc-finger motif lies at 253–280 (CPHCGYSVPELEPRLFSFNNPAGACPTC). 2 consecutive ABC transporter domains span residues 310-587 (WDRR…PHSI) and 607-937 (LDKK…RFLK). Residue 640-647 (GVSGSGKS) coordinates ATP. Residues 740 to 766 (CEACQGDGVIKVEMHFLPDVYVPCEQC) form a C4-type zinc finger.

Belongs to the ABC transporter superfamily. UvrA family. In terms of assembly, forms a heterotetramer with UvrB during the search for lesions.

It localises to the cytoplasm. Its function is as follows. The UvrABC repair system catalyzes the recognition and processing of DNA lesions. UvrA is an ATPase and a DNA-binding protein. A damage recognition complex composed of 2 UvrA and 2 UvrB subunits scans DNA for abnormalities. When the presence of a lesion has been verified by UvrB, the UvrA molecules dissociate. This is UvrABC system protein A from Pasteurella multocida (strain Pm70).